A 122-amino-acid polypeptide reads, in one-letter code: Large ribosomal subunit protein uL14 (122 aa).

Belongs to the universal ribosomal protein uL14 family. In terms of assembly, part of the 50S ribosomal subunit. Forms a cluster with proteins L3 and L19. In the 70S ribosome, L14 and L19 interact and together make contacts with the 16S rRNA in bridges B5 and B8.

In terms of biological role, binds to 23S rRNA. Forms part of two intersubunit bridges in the 70S ribosome. The polypeptide is Large ribosomal subunit protein uL14 (Helicobacter hepaticus (strain ATCC 51449 / 3B1)).